A 160-amino-acid polypeptide reads, in one-letter code: MGKIALQLKATLENVTNLRPVGEDFRWYLKMKCGNCGEISEKWQYIRLMDSVALKGGRGSASMVQKCKLCARENSIDILSSTIKAYNAEDNEKFKTIVEFECRGLEPVDFQPQAGFAADGVESGTVFSDINLQEKDWTDYDEKAQESVGIFEVTHQFVKC.

Residues Cys-33, Cys-36, Cys-67, and Cys-70 each coordinate Zn(2+). At Ser-75 the chain carries Phosphoserine.

Belongs to the UPF0587 family. Monomer.

The polypeptide is CXXC motif containing zinc binding protein (Czib) (Mus musculus (Mouse)).